We begin with the raw amino-acid sequence, 345 residues long: Dihydroorotase (345 aa).

2 residues coordinate Zn(2+): His13 and His15. Substrate contacts are provided by residues 15-17 and Asn41; that span reads HLR. 3 residues coordinate Zn(2+): Lys99, His136, and His174. An N6-carboxylysine modification is found at Lys99. His136 contacts substrate. Leu219 serves as a coordination point for substrate. Residue Asp247 coordinates Zn(2+). Asp247 is an active-site residue. Substrate contacts are provided by His251 and Ala263.

The protein belongs to the metallo-dependent hydrolases superfamily. DHOase family. Class II DHOase subfamily. In terms of assembly, homodimer. The cofactor is Zn(2+).

The enzyme catalyses (S)-dihydroorotate + H2O = N-carbamoyl-L-aspartate + H(+). Its pathway is pyrimidine metabolism; UMP biosynthesis via de novo pathway; (S)-dihydroorotate from bicarbonate: step 3/3. Its function is as follows. Catalyzes the reversible cyclization of carbamoyl aspartate to dihydroorotate. This chain is Dihydroorotase, found in Hahella chejuensis (strain KCTC 2396).